We begin with the raw amino-acid sequence, 270 residues long: tRNA pseudouridine synthase A (270 aa).

The active-site Nucleophile is the Asp-51. Tyr-109 contacts substrate.

It belongs to the tRNA pseudouridine synthase TruA family. As to quaternary structure, homodimer.

It catalyses the reaction uridine(38/39/40) in tRNA = pseudouridine(38/39/40) in tRNA. In terms of biological role, formation of pseudouridine at positions 38, 39 and 40 in the anticodon stem and loop of transfer RNAs. The polypeptide is tRNA pseudouridine synthase A (Burkholderia orbicola (strain MC0-3)).